Consider the following 160-residue polypeptide: MNSMLNPNAVPFQPSPQVVALPMQYPSGFSSGYRRQRDPAFRPMFRRQNNGNQNRSRQNRQRLQNNNRGNNRNRNQFNRRQNQPSQSMSFEQQLLLMANETAYAATYPSDMQNIAPTKLVKIAKRAAMQIVSGHATVEISNGTEDSNQRVATFTIKVVMN.

The segment at 31–60 is involved in nuclear and nucleolar localization; it reads SGYRRQRDPAFRPMFRRQNNGNQNRSRQNR. The tract at residues 44-88 is disordered; sequence MFRRQNNGNQNRSRQNRQRLQNNNRGNNRNRNQFNRRQNQPSQSM. Residues 46 to 83 are compositionally biased toward low complexity; it reads RRQNNGNQNRSRQNRQRLQNNNRGNNRNRNQFNRRQNQ. The short motif at 146–155 is the Nuclear export signal element; it reads SNQRVATFTI.

The protein belongs to the toroviruses nucleocapsid protein family.

The protein localises to the virion. Its subcellular location is the host nucleus. It is found in the host nucleoplasm. It localises to the host nucleolus. Functionally, major structural component of virions that associates with genomic RNA. The protein is Nucleoprotein (N) of Berne virus (BEV).